The chain runs to 92 residues: uncharacterized protein (92 aa).

This is an uncharacterized protein from Schizosaccharomyces pombe (strain 972 / ATCC 24843) (Fission yeast).